A 392-amino-acid chain; its full sequence is Speckle-type POZ protein-like A (392 aa).

Residues 31–161 enclose the MATH domain; sequence KFSYMWTINN…DDKLTLFCEV (131 aa). Residues 200–267 enclose the BTB domain; that stretch reads TDCSLYVGGQ…IYTGKAPNLE (68 aa).

This sequence belongs to the Tdpoz family. Homodimer. Heterodimer with SPOP. Component of cullin-RING-based BCR (BTB-CUL3-RBX1) E3 ubiquitin-protein ligase complexes containing homodimeric SPOPL or the heterodimer formed by SPOP and SPOPL.

It is found in the nucleus. It participates in protein modification; protein ubiquitination. Functionally, component of a cullin-RING-based BCR (BTB-CUL3-RBX1) E3 ubiquitin-protein ligase complex that mediates the ubiquitination and subsequent proteasomal degradation of target proteins, but with relatively low efficiency. The sequence is that of Speckle-type POZ protein-like A (spopla) from Danio rerio (Zebrafish).